The sequence spans 276 residues: Protease HtpX homolog (276 aa).

The chain crosses the membrane as a helical span at residues 16–36 (LFIWFGGMIAGQTGMVIAFLV). Zn(2+) is bound at residue His130. The active site involves Glu131. Position 134 (His134) interacts with Zn(2+). The next 2 helical transmembrane spans lie at 142-162 (IGTVAATIAGAIAMLANFGMF) and 173-193 (IFVMLALMFIMPMAASIIQMT). Residue Glu199 participates in Zn(2+) binding.

The protein belongs to the peptidase M48B family. Zn(2+) is required as a cofactor.

Its subcellular location is the cell inner membrane. This chain is Protease HtpX homolog, found in Sulfurovum sp. (strain NBC37-1).